An 89-amino-acid chain; its full sequence is Small ribosomal subunit protein uS15 (89 aa).

A compositionally biased stretch (basic and acidic residues) spans 1-21; sequence MSITTEEKARVMKEYGTKDGD. The disordered stretch occupies residues 1 to 24; sequence MSITTEEKARVMKEYGTKDGDTGS.

This sequence belongs to the universal ribosomal protein uS15 family. In terms of assembly, part of the 30S ribosomal subunit. Forms a bridge to the 50S subunit in the 70S ribosome, contacting the 23S rRNA.

Its function is as follows. One of the primary rRNA binding proteins, it binds directly to 16S rRNA where it helps nucleate assembly of the platform of the 30S subunit by binding and bridging several RNA helices of the 16S rRNA. Forms an intersubunit bridge (bridge B4) with the 23S rRNA of the 50S subunit in the ribosome. The polypeptide is Small ribosomal subunit protein uS15 (Ruegeria pomeroyi (strain ATCC 700808 / DSM 15171 / DSS-3) (Silicibacter pomeroyi)).